The chain runs to 364 residues: Chorismate synthase (364 aa).

Arginine 48 is a binding site for NADP(+). FMN is bound by residues 126–128 (RSS), glycine 288, 303–307 (KPIAS), and arginine 329.

This sequence belongs to the chorismate synthase family. In terms of assembly, homotetramer. It depends on FMNH2 as a cofactor.

It carries out the reaction 5-O-(1-carboxyvinyl)-3-phosphoshikimate = chorismate + phosphate. The protein operates within metabolic intermediate biosynthesis; chorismate biosynthesis; chorismate from D-erythrose 4-phosphate and phosphoenolpyruvate: step 7/7. Functionally, catalyzes the anti-1,4-elimination of the C-3 phosphate and the C-6 proR hydrogen from 5-enolpyruvylshikimate-3-phosphate (EPSP) to yield chorismate, which is the branch point compound that serves as the starting substrate for the three terminal pathways of aromatic amino acid biosynthesis. This reaction introduces a second double bond into the aromatic ring system. The chain is Chorismate synthase from Desulfovibrio desulfuricans (strain ATCC 27774 / DSM 6949 / MB).